A 175-amino-acid polypeptide reads, in one-letter code: NADH-ubiquinone oxidoreductase chain 6 (175 aa).

5 helical membrane-spanning segments follow: residues methionine 1–serine 21, serine 25–leucine 45, glycine 48–phenylalanine 68, threonine 88–isoleucine 108, and tyrosine 149–methionine 169.

It belongs to the complex I subunit 6 family. As to quaternary structure, core subunit of respiratory chain NADH dehydrogenase (Complex I) which is composed of 45 different subunits.

Its subcellular location is the mitochondrion inner membrane. It carries out the reaction a ubiquinone + NADH + 5 H(+)(in) = a ubiquinol + NAD(+) + 4 H(+)(out). Its function is as follows. Core subunit of the mitochondrial membrane respiratory chain NADH dehydrogenase (Complex I) which catalyzes electron transfer from NADH through the respiratory chain, using ubiquinone as an electron acceptor. Essential for the catalytic activity and assembly of complex I. The sequence is that of NADH-ubiquinone oxidoreductase chain 6 (MT-ND6) from Urotrichus talpoides (Japanese shrew mole).